Reading from the N-terminus, the 583-residue chain is Phytoene desaturase (583 aa).

An N-terminal signal peptide occupies residues 1-20 (MAPPKHVIIIGAGAGGTATA). Residues 531–551 (IIWFLLIALFAATLVLFIAFP) traverse the membrane as a helical segment.

Belongs to the carotenoid/retinoid oxidoreductase family. NAD(+) serves as cofactor.

Its subcellular location is the membrane. It carries out the reaction 15-cis-phytoene + 5 A = all-trans-3,4-didehydrolycopene + 5 AH2. It participates in carotenoid biosynthesis; lycopene biosynthesis. Functionally, phytoene desaturase involved in the carotenoid biosynthesis pathway. Converts phytoene into 3,4-didehydrolycopene via the intermediary of phytofluene, zeta-carotene, neurosporene and lycopene, by introducing up to five double bonds into phytoene. This is Phytoene desaturase (carB) from Phycomyces blakesleeanus (strain ATCC 8743b / DSM 1359 / FGSC 10004 / NBRC 33097 / NRRL 1555).